A 66-amino-acid polypeptide reads, in one-letter code: MAKGKDVRIRVILECISCVRKGANEESTGISRYSTEKNRHNTPGQLEFKKFCRYCRKHTTHHEIKK.

It belongs to the bacterial ribosomal protein bL33 family.

It is found in the plastid. The protein resides in the chloroplast. This is Large ribosomal subunit protein bL33c from Brachypodium distachyon (Purple false brome).